A 902-amino-acid chain; its full sequence is AP-4 complex accessory subunit RUSC1 (902 aa).

Disordered regions lie at residues Glu-31–Pro-67, Leu-81–Cys-155, Gln-189–Pro-227, and Lys-247–Gly-450. A compositionally biased stretch (low complexity) spans Ala-94 to Leu-112. Over residues Thr-249–Asn-261 the composition is skewed to low complexity. Positions Trp-277–Lys-289 are enriched in polar residues. The span at Asp-291–Pro-309 shows a compositional bias: basic and acidic residues. 2 stretches are compositionally biased toward pro residues: residues Pro-381–Pro-390 and Pro-398–Pro-407. Residues Pro-433–Gly-450 show a composition bias toward low complexity. The interval Met-470–Asn-605 is interaction with TRAF6. The region spanning Asp-522–Glu-666 is the RUN domain. Residues Thr-606–Pro-672 form an interaction with IKBKG region. Disordered stretches follow at residues Leu-706 to Trp-729 and Gly-747 to Met-776. Residues Gln-844 to Leu-902 enclose the SH3 domain.

As to quaternary structure, associated component of the adapter-like complex 4 (AP-4). Interacts with IKBKG and TRAF6. Interacts with F-actin, acetylated actin, TUBB3, STX1A, KIF5B and KLC1. In terms of processing, phosphorylated on serine residues following nuclear translocation. Post-translationally, polyubiquitinated; polyubiquitination involves TRAF6. As to expression, predominantly expressed in brain.

The protein localises to the cytoplasm. Its subcellular location is the nucleus. The protein resides in the cytoskeleton. It localises to the cytoplasmic vesicle. It is found in the early endosome. The protein localises to the postsynaptic density. Its subcellular location is the golgi apparatus. Its function is as follows. Associates with the adapter-like complex 4 (AP-4) and may therefore play a role in vesicular trafficking of proteins at the trans-Golgi network. Signaling adapter which plays a role in neuronal differentiation. Involved in regulation of NGF-dependent neurite outgrowth. May play a role in neuronal vesicular trafficking, specifically involving pre-synaptic membrane proteins. Seems to be involved in signaling pathways that are regulated by the prolonged activation of MAPK. Can regulate the polyubiquitination of IKBKG and thus may be involved in regulation of the NF-kappa-B pathway. This chain is AP-4 complex accessory subunit RUSC1, found in Homo sapiens (Human).